A 369-amino-acid polypeptide reads, in one-letter code: Glutamate 5-kinase (369 aa).

Lys9 lines the ATP pocket. Residues Ser49, Asp136, and Asn148 each contribute to the substrate site. ATP contacts are provided by residues 168 to 169 (TD) and 210 to 216 (TGGMLTK). The PUA domain occupies 275–355 (QGEIYVDQGA…KGVVIHRDDW (81 aa)).

The protein belongs to the glutamate 5-kinase family.

The protein resides in the cytoplasm. It carries out the reaction L-glutamate + ATP = L-glutamyl 5-phosphate + ADP. It participates in amino-acid biosynthesis; L-proline biosynthesis; L-glutamate 5-semialdehyde from L-glutamate: step 1/2. Catalyzes the transfer of a phosphate group to glutamate to form L-glutamate 5-phosphate. The sequence is that of Glutamate 5-kinase from Streptococcus sanguinis (strain SK36).